A 319-amino-acid chain; its full sequence is tRNA-cytidine(32) 2-sulfurtransferase (319 aa).

The PP-loop motif signature appears at 43 to 48; sequence SGGKDS. [4Fe-4S] cluster contacts are provided by C118, C121, and C209.

The protein belongs to the TtcA family. Homodimer. It depends on Mg(2+) as a cofactor. Requires [4Fe-4S] cluster as cofactor.

Its subcellular location is the cytoplasm. It catalyses the reaction cytidine(32) in tRNA + S-sulfanyl-L-cysteinyl-[cysteine desulfurase] + AH2 + ATP = 2-thiocytidine(32) in tRNA + L-cysteinyl-[cysteine desulfurase] + A + AMP + diphosphate + H(+). It functions in the pathway tRNA modification. Functionally, catalyzes the ATP-dependent 2-thiolation of cytidine in position 32 of tRNA, to form 2-thiocytidine (s(2)C32). The sulfur atoms are provided by the cysteine/cysteine desulfurase (IscS) system. The chain is tRNA-cytidine(32) 2-sulfurtransferase from Neisseria meningitidis serogroup A / serotype 4A (strain DSM 15465 / Z2491).